The primary structure comprises 491 residues: F-box protein At3g59000 (491 aa).

An F-box domain is found at 1–49; sequence MDRVGSLPDELLSHILSFLTTKEAALTSLLSKRWRYLIAFVPNLAFDDI.

In terms of assembly, part of a SCF (ASK-cullin-F-box) protein ligase complex. Interacts with ASK4.

It localises to the nucleus. It functions in the pathway protein modification; protein ubiquitination. Functionally, component of SCF(ASK-cullin-F-box) E3 ubiquitin ligase complexes, which may mediate the ubiquitination and subsequent proteasomal degradation of target proteins. In Arabidopsis thaliana (Mouse-ear cress), this protein is F-box protein At3g59000.